Reading from the N-terminus, the 477-residue chain is Bifunctional protein HldE (477 aa).

Residues 1–318 (MKVTLPEFER…ENAVRGRADT (318 aa)) are ribokinase. At Lys-179 the chain carries N6-acetyllysine. Position 195-198 (195-198 (NLSE)) interacts with ATP. Asp-264 is an active-site residue. The tract at residues 344–477 (MTNGVFDILH…IKKIQQDKKG (134 aa)) is cytidylyltransferase.

The protein in the N-terminal section; belongs to the carbohydrate kinase PfkB family. In the C-terminal section; belongs to the cytidylyltransferase family. Homodimer.

It catalyses the reaction D-glycero-beta-D-manno-heptose 7-phosphate + ATP = D-glycero-beta-D-manno-heptose 1,7-bisphosphate + ADP + H(+). It carries out the reaction D-glycero-beta-D-manno-heptose 1-phosphate + ATP + H(+) = ADP-D-glycero-beta-D-manno-heptose + diphosphate. It participates in nucleotide-sugar biosynthesis; ADP-L-glycero-beta-D-manno-heptose biosynthesis; ADP-L-glycero-beta-D-manno-heptose from D-glycero-beta-D-manno-heptose 7-phosphate: step 1/4. Its pathway is nucleotide-sugar biosynthesis; ADP-L-glycero-beta-D-manno-heptose biosynthesis; ADP-L-glycero-beta-D-manno-heptose from D-glycero-beta-D-manno-heptose 7-phosphate: step 3/4. The protein operates within bacterial outer membrane biogenesis; LPS core biosynthesis. Its function is as follows. Catalyzes the phosphorylation of D-glycero-D-manno-heptose 7-phosphate at the C-1 position to selectively form D-glycero-beta-D-manno-heptose-1,7-bisphosphate. Catalyzes the ADP transfer from ATP to D-glycero-beta-D-manno-heptose 1-phosphate, yielding ADP-D-glycero-beta-D-manno-heptose. The sequence is that of Bifunctional protein HldE from Escherichia coli O157:H7.